We begin with the raw amino-acid sequence, 385 residues long: uncharacterized protein (385 aa).

Belongs to the mycobacterial PPE family.

This is an uncharacterized protein from Mycobacterium tuberculosis (strain CDC 1551 / Oshkosh).